The following is a 757-amino-acid chain: Endonuclease MutS2 (757 aa).

321–328 lines the ATP pocket; it reads GPNMGGKT. In terms of domain architecture, Smr spans 681–756; sequence IDIRGMTVEE…GTGVTVVEVE (76 aa).

This sequence belongs to the DNA mismatch repair MutS family. MutS2 subfamily. As to quaternary structure, homodimer. Binds to stalled ribosomes, contacting rRNA.

Endonuclease that is involved in the suppression of homologous recombination and thus may have a key role in the control of bacterial genetic diversity. Its function is as follows. Acts as a ribosome collision sensor, splitting the ribosome into its 2 subunits. Detects stalled/collided 70S ribosomes which it binds and splits by an ATP-hydrolysis driven conformational change. Acts upstream of the ribosome quality control system (RQC), a ribosome-associated complex that mediates the extraction of incompletely synthesized nascent chains from stalled ribosomes and their subsequent degradation. Probably generates substrates for RQC. This Thermotoga neapolitana (strain ATCC 49049 / DSM 4359 / NBRC 107923 / NS-E) protein is Endonuclease MutS2.